A 393-amino-acid chain; its full sequence is Pre-mRNA-splicing regulator WTAP (393 aa).

The segment at 240–393 (QQQIQTSGNR…SSVNVQGSVL (154 aa)) is disordered. Positions 254–267 (ESKDEGETSGKDCG) are enriched in basic and acidic residues. Polar residues predominate over residues 272–286 (GPSNGGSSHQRTHSS). The span at 310–319 (LPNHSEERTS) shows a compositional bias: basic and acidic residues. A compositionally biased stretch (polar residues) spans 320–353 (RGGSSYMNQLSTGYESVDSPTGSENSLTHQSNDT). Residues 354-365 (DSNHDSQEEKPV) show a composition bias toward basic and acidic residues. Polar residues predominate over residues 369-393 (GNRTVSSRHLQNGLDSSVNVQGSVL).

Belongs to the fl(2)d family. As to quaternary structure, component of the WMM complex, a N6-methyltransferase complex composed of a catalytic subcomplex, named MAC, and of an associated subcomplex, named MACOM. Component of the MACOM subcomplex.

The protein localises to the nucleus speckle. The protein resides in the nucleus. It is found in the nucleoplasm. Associated component of the WMM complex, a complex that mediates N6-methyladenosine (m6A) methylation of RNAs, a modification that plays a role in the efficiency of mRNA splicing and RNA processing. This is Pre-mRNA-splicing regulator WTAP from Xenopus tropicalis (Western clawed frog).